Consider the following 594-residue polypeptide: Segmentation polarity homeobox protein engrailed (594 aa).

Disordered stretches follow at residues Met1–Glu64, Ile76–Ile127, Lys141–Gly164, His198–Ala217, Ile231–Ser299, Ala387–Asn458, and Asp474–Thr501. Over residues Ser22 to Pro60 the composition is skewed to low complexity. Positions Pro92–His112 are enriched in basic residues. A compositionally biased stretch (pro residues) spans His151–Gly164. Positions Leu237–Thr247 are enriched in polar residues. Low complexity-rich tracts occupy residues Ala278–Ser299 and Ala387–Ala402. 2 stretches are compositionally biased toward polar residues: residues Ser426–Asp436 and Glu448–Asn458. Residues Gln487–Pro499 show a composition bias toward basic and acidic residues. The homeobox DNA-binding region spans Glu496–Ser555.

The protein belongs to the engrailed homeobox family.

It localises to the nucleus. Its function is as follows. This protein specifies the body segmentation pattern. It is required for the development of the central nervous system. Transcriptional regulator that repress activated promoters. This chain is Segmentation polarity homeobox protein engrailed (en), found in Anopheles gambiae (African malaria mosquito).